Here is a 486-residue protein sequence, read N- to C-terminus: Glutamate--tRNA ligase (486 aa).

Positions 11-21 (PSPTGLLHIGN) match the 'HIGH' region motif. Positions 255 to 259 (KLSKR) match the 'KMSKS' region motif. Residue Lys258 coordinates ATP.

Belongs to the class-I aminoacyl-tRNA synthetase family. Glutamate--tRNA ligase type 1 subfamily. Monomer.

Its subcellular location is the cytoplasm. The enzyme catalyses tRNA(Glu) + L-glutamate + ATP = L-glutamyl-tRNA(Glu) + AMP + diphosphate. Functionally, catalyzes the attachment of glutamate to tRNA(Glu) in a two-step reaction: glutamate is first activated by ATP to form Glu-AMP and then transferred to the acceptor end of tRNA(Glu). This Streptococcus pneumoniae (strain ATCC BAA-255 / R6) protein is Glutamate--tRNA ligase.